The chain runs to 262 residues: DNA repair protein RecO (262 aa).

The protein belongs to the RecO family.

Functionally, involved in DNA repair and RecF pathway recombination. The sequence is that of DNA repair protein RecO from Enterococcus faecalis (strain ATCC 700802 / V583).